The primary structure comprises 333 residues: Homeobox protein Nkx-3.2 (333 aa).

2 disordered regions span residues 74–121 (PART…RARV) and 137–212 (DLEE…SRAA). The span at 137–148 (DLEEEAPVRSDS) shows a compositional bias: basic and acidic residues. Over residues 179–191 (GAAGSGASGGQAG) the composition is skewed to gly residues. The segment at residues 206-265 (KKRSRAAFSHAQVFELERRFNHQRYLSGPERADLAASLKLTETQVKIWFQNRRYKTKRRQ) is a DNA-binding region (homeobox).

Belongs to the NK-3 homeobox family. Expressed widely in mesoderm at the gastroduodenal junction (at protein level). Expressed in visceral mesoderm and embryonic skeleton. Expression is restricted to immature proliferative chondrocytes during endochondral ossification.

It localises to the nucleus. In terms of biological role, transcriptional repressor that acts as a negative regulator of chondrocyte maturation. PLays a role in distal stomach development; required for proper antral-pyloric morphogenesis and development of antral-type epithelium. In concert with GSC, defines the structural components of the middle ear; required for tympanic ring and gonium development and in the regulation of the width of the malleus. This is Homeobox protein Nkx-3.2 (Nkx3-2) from Mus musculus (Mouse).